Consider the following 473-residue polypeptide: Zinc transporter SLC39A7 (473 aa).

The chain crosses the membrane as a helical span at residues 11–31; that stretch reads VAVGLLTWAALGLLVAGHGGH. Basic and acidic residues-rich tracts occupy residues 44–56 and 66–114; these read GHSH…DFHH and HTHE…EHSH. The interval 44–120 is disordered; it reads GHSHRHSHED…EHSHGGYGES (77 aa). Histidine 66 bears the Pros-methylhistidine mark. The next 3 helical transmembrane spans lie at 138–158, 169–189, and 214–234; these read ALGA…LIPV, LQIL…LHLI, and GPIL…LVVE. The tract at residues 243–316 is disordered; that stretch reads GHEHSHGHGH…QHSGEEKAGS (74 aa). Serine 278 and serine 279 each carry phosphoserine. The span at 298–316 shows a compositional bias: basic and acidic residues; that stretch reads RPKDGPVRPQHSGEEKAGS. Residues 388-408 form a helical membrane-spanning segment; sequence LLTAVGALAGTAFALLTEGGA. Residues 428–473 form a disordered region; the sequence is GDQAATQASPRSTSLPPVGEEDFREDPGPRQKGQQEKSGINVNCVS. A compositionally biased stretch (polar residues) spans 431–442; that stretch reads AATQASPRSTSL. The span at 452–462 shows a compositional bias: basic and acidic residues; sequence EDPGPRQKGQQ. Polar residues predominate over residues 463 to 473; sequence EKSGINVNCVS.

It belongs to the ZIP transporter (TC 2.A.5) family. KE4/Catsup subfamily. Homodimer. Methylation at some His residue by METTL9 leads to reduced zinc-binding. Post-translationally, rapidly phosphorylated by CK2 following Zn(2+) treatment. This phosphorylation is required for efficient cytosolic Zn(2+) release.

The protein resides in the endoplasmic reticulum membrane. The protein localises to the golgi apparatus. It localises to the cis-Golgi network membrane. The catalysed reaction is Zn(2+)(in) = Zn(2+)(out). Transports Zn(2+) from the endoplasmic reticulum (ER)/Golgi apparatus to the cytosol, playing an essential role in the regulation of cytosolic zinc levels. Acts as a gatekeeper of zinc release from intracellular stores, requiring post-translational activation by phosphorylation on residues, resulting in activation of multiple downstream pathways leading to cell growth and proliferation. Has an essential role in B cell development and is required for proper B cell receptor signaling. Plays an important role in maintaining intestinal epithelial homeostasis and skin dermis development by regulating ER function. Controls cell signaling pathways involved in glucose metabolism in skeletal muscle. Has a protective role against ER stress in different biological contexts. Mediates Zn(2+)-induced ferroptosis. The protein is Zinc transporter SLC39A7 (SLC39A7) of Sus scrofa (Pig).